A 155-amino-acid chain; its full sequence is Endoribonuclease YbeY (155 aa).

Zn(2+)-binding residues include His120, His124, and His130.

The protein belongs to the endoribonuclease YbeY family. Requires Zn(2+) as cofactor.

The protein localises to the cytoplasm. Its function is as follows. Single strand-specific metallo-endoribonuclease involved in late-stage 70S ribosome quality control and in maturation of the 3' terminus of the 16S rRNA. This Staphylococcus epidermidis (strain ATCC 35984 / DSM 28319 / BCRC 17069 / CCUG 31568 / BM 3577 / RP62A) protein is Endoribonuclease YbeY.